The following is a 74-amino-acid chain: DNA-directed RNA polymerase subunit omega (74 aa).

This sequence belongs to the RNA polymerase subunit omega family. In terms of assembly, the RNAP catalytic core consists of 2 alpha, 1 beta, 1 beta' and 1 omega subunit. When a sigma factor is associated with the core the holoenzyme is formed, which can initiate transcription.

It carries out the reaction RNA(n) + a ribonucleoside 5'-triphosphate = RNA(n+1) + diphosphate. Functionally, promotes RNA polymerase assembly. Latches the N- and C-terminal regions of the beta' subunit thereby facilitating its interaction with the beta and alpha subunits. In Marinomonas sp. (strain MWYL1), this protein is DNA-directed RNA polymerase subunit omega.